The following is a 238-amino-acid chain: Pyridoxine 5'-phosphate synthase (238 aa).

Position 7 (asparagine 7) interacts with 3-amino-2-oxopropyl phosphate. Residue 9-10 (DH) participates in 1-deoxy-D-xylulose 5-phosphate binding. Arginine 18 serves as a coordination point for 3-amino-2-oxopropyl phosphate. Histidine 43 acts as the Proton acceptor in catalysis. 1-deoxy-D-xylulose 5-phosphate-binding residues include arginine 45 and histidine 50. Residue glutamate 70 is the Proton acceptor of the active site. Position 100 (threonine 100) interacts with 1-deoxy-D-xylulose 5-phosphate. Catalysis depends on histidine 190, which acts as the Proton donor. Residues glycine 191 and 212–213 (GH) each bind 3-amino-2-oxopropyl phosphate.

This sequence belongs to the PNP synthase family. In terms of assembly, homooctamer; tetramer of dimers.

Its subcellular location is the cytoplasm. It catalyses the reaction 3-amino-2-oxopropyl phosphate + 1-deoxy-D-xylulose 5-phosphate = pyridoxine 5'-phosphate + phosphate + 2 H2O + H(+). The protein operates within cofactor biosynthesis; pyridoxine 5'-phosphate biosynthesis; pyridoxine 5'-phosphate from D-erythrose 4-phosphate: step 5/5. Its function is as follows. Catalyzes the complicated ring closure reaction between the two acyclic compounds 1-deoxy-D-xylulose-5-phosphate (DXP) and 3-amino-2-oxopropyl phosphate (1-amino-acetone-3-phosphate or AAP) to form pyridoxine 5'-phosphate (PNP) and inorganic phosphate. This Prochlorococcus marinus (strain MIT 9515) protein is Pyridoxine 5'-phosphate synthase.